The sequence spans 171 residues: Regulatory protein RecX (171 aa).

Belongs to the RecX family.

It is found in the cytoplasm. In terms of biological role, modulates RecA activity. In Mycobacterium leprae (strain Br4923), this protein is Regulatory protein RecX.